The chain runs to 1015 residues: Cytosolic carboxypeptidase 1 (1015 aa).

The segment at 384 to 462 (LPTATPSTPG…GALPKTTRLN (79 aa)) is disordered. Residues 416 to 451 (EDGMDEEDEAFVRDDDDEGKDDRGSDDDDGKDDDEI) are compositionally biased toward acidic residues. The Peptidase M14 domain occupies 727 to 1013 (YPYTYSFLNS…DLLHSFLEMT (287 aa)). Zn(2+) contacts are provided by His-792, Glu-795, and His-891. Glu-977 acts as the Proton donor/acceptor in catalysis.

Belongs to the peptidase M14 family. It depends on Zn(2+) as a cofactor. In terms of tissue distribution, in hermaphrodites and males, expressed in amphid and IL2 ciliated sensory neurons. In males, expressed in CEM head neurons, RnB and HOB tail neurons, and in gubernacular erector and retractor muscles.

The protein localises to the perikaryon. The protein resides in the cell projection. It localises to the cilium. It is found in the dendrite. Functionally, catalyzes the deglutamylation of polyglutamate side chains generated by post-translational polyglutamylation of proteins such as tubulins. Via the deglutamylation of tubulin, regulates the localization and velocity of kinesin motors and the structural integrity of microtubules in sensory cilia. In male CEM sensory neurons, regulates the cilia release of bioactive extracellular vesicles. Also regulates microtubule dynamics in uterine muscle cells. This is Cytosolic carboxypeptidase 1 from Caenorhabditis elegans.